The sequence spans 887 residues: MAEAVELPSRLGILAFRNKVLLPGAIIRIRCTSPSSVKLVEQELWQREEKGLIGIVPVRDASESASVAPVLYPGGGTDSGERNVKSQPGLSDSRKADGKSQQEAVHWHTRGVAARALHLSRGVEKPSGRVTYTVVLEGLCRFRVMELNSRGNYYTARISPLDITKADMEQAQQDPDFVSLARQFKVTAVELISVLEQKQKTGGRTKVLLETVPVHKLADIFVASFEISFEEQLCMLDSIDLKVRLSKATELVDRHLQSIRVAEKITQKVEGQLSKSQREFLLRQQMRAIKEELGDNDDDEDDVAVLERKMQSAGMPANIWKHAQRELRRLKKMQPQQPGYSSSRVYLELLADLPWQNATEEQKLDLRAAKERLDSDHYGLVKVKQRIIEYLAVRKLKPDARGPILCFVGPPGVGKTSLAASISAALGRKFIRISLGGVKDEADIRGHRRTYIGSMPGRLIDGIKRVGVSNPVMLLDEIDKTGSDVRGDPASALLEVLDPEQNKTFNDHYLNVPYDLSKVIFVATANKVQPIPPPLLDRMEVIELPGYTPEEKARIAMQYLIPRVMDQHGLSSEFLQISEDMVKLIIQRYTREAGVRNLERNLSALARAAAVKVAEQDNATAVSKDFHQFTSPVEESRLAEGAEVEMEVIPMGVDNREISNALQVMSPLIVDETMLENVLGPPRYDDRETAERVSNPGVSVGLVWTAFGGEVQFVEASVMAGKGELRLTGQLGDVIKESAQIALTWVRARAMELNLVATGEINLMEGRDIHIHFPAGAVPKDGPSAGVTLVTALVSLLSQKRMRADTAMTGEMTLRGLVLPVGGVKDKVLAAHRYGIKRVILPERNLKDLVEVPSAVLSNLEIIYAKRMEVLEQAFEGGCPWRQRARL.

The Lon N-terminal domain maps to 11–256 (LGILAFRNKV…KATELVDRHL (246 aa)). The segment at 72-101 (YPGGGTDSGERNVKSQPGLSDSRKADGKSQ) is disordered. 409–416 (GPPGVGKT) provides a ligand contact to ATP. Residues 693 to 878 (VSNPGVSVGL…EVLEQAFEGG (186 aa)) form the Lon proteolytic domain. Residues Ser784 and Lys827 contribute to the active site. The Microbody targeting signal signature appears at 885-887 (ARL).

Belongs to the peptidase S16 family.

It localises to the peroxisome matrix. The enzyme catalyses Hydrolysis of proteins in presence of ATP.. In terms of biological role, ATP-dependent serine protease that mediates the selective degradation of misfolded and unassembled polypeptides in the peroxisomal matrix. Necessary for type 2 peroxisome targeting signal (PTS2)-containing protein processing and facilitates peroxisome matrix protein import. The chain is Lon protease homolog 2, peroxisomal from Spinacia oleracea (Spinach).